The sequence spans 668 residues: Bifunctional polymyxin resistance protein ArnA (668 aa).

The formyltransferase ArnAFT stretch occupies residues 1-307; that stretch reads MSNKAVVFAY…ELGLVDGSLL (307 aa). His-106 functions as the Proton donor; for formyltransferase activity in the catalytic mechanism. (6R)-10-formyltetrahydrofolate contacts are provided by residues Arg-116 and 138-142; that span reads VKRAD. A dehydrogenase ArnADH region spans residues 317–668; it reads RRTRVLILGV…IADRAKQEAR (352 aa). NAD(+)-binding positions include Asp-350 and 371-372; that span reads DI. Residues Ala-396, Tyr-401, and 435–436 contribute to the UDP-alpha-D-glucuronate site; that span reads TS. The Proton acceptor; for decarboxylase activity role is filled by Glu-437. UDP-alpha-D-glucuronate is bound by residues Arg-463, Asn-494, 528–537, and Tyr-615; that span reads RLFDGGEQKR. The active-site Proton donor; for decarboxylase activity is the Arg-621.

This sequence in the N-terminal section; belongs to the Fmt family. UDP-L-Ara4N formyltransferase subfamily. It in the C-terminal section; belongs to the NAD(P)-dependent epimerase/dehydratase family. UDP-glucuronic acid decarboxylase subfamily. Homohexamer, formed by a dimer of trimers.

It carries out the reaction UDP-alpha-D-glucuronate + NAD(+) = UDP-beta-L-threo-pentopyranos-4-ulose + CO2 + NADH. The enzyme catalyses UDP-4-amino-4-deoxy-beta-L-arabinose + (6R)-10-formyltetrahydrofolate = UDP-4-deoxy-4-formamido-beta-L-arabinose + (6S)-5,6,7,8-tetrahydrofolate + H(+). It participates in nucleotide-sugar biosynthesis; UDP-4-deoxy-4-formamido-beta-L-arabinose biosynthesis; UDP-4-deoxy-4-formamido-beta-L-arabinose from UDP-alpha-D-glucuronate: step 1/3. The protein operates within nucleotide-sugar biosynthesis; UDP-4-deoxy-4-formamido-beta-L-arabinose biosynthesis; UDP-4-deoxy-4-formamido-beta-L-arabinose from UDP-alpha-D-glucuronate: step 3/3. It functions in the pathway bacterial outer membrane biogenesis; lipopolysaccharide biosynthesis. Functionally, bifunctional enzyme that catalyzes the oxidative decarboxylation of UDP-glucuronic acid (UDP-GlcUA) to UDP-4-keto-arabinose (UDP-Ara4O) and the addition of a formyl group to UDP-4-amino-4-deoxy-L-arabinose (UDP-L-Ara4N) to form UDP-L-4-formamido-arabinose (UDP-L-Ara4FN). The modified arabinose is attached to lipid A and is required for resistance to polymyxin and cationic antimicrobial peptides. The polypeptide is Bifunctional polymyxin resistance protein ArnA (Pseudomonas fluorescens (strain ATCC BAA-477 / NRRL B-23932 / Pf-5)).